A 291-amino-acid polypeptide reads, in one-letter code: ATP synthase gamma chain (291 aa).

It belongs to the ATPase gamma chain family. As to quaternary structure, F-type ATPases have 2 components, CF(1) - the catalytic core - and CF(0) - the membrane proton channel. CF(1) has five subunits: alpha(3), beta(3), gamma(1), delta(1), epsilon(1). CF(0) has three main subunits: a, b and c.

The protein resides in the cell inner membrane. Its function is as follows. Produces ATP from ADP in the presence of a proton gradient across the membrane. The gamma chain is believed to be important in regulating ATPase activity and the flow of protons through the CF(0) complex. In Cupriavidus necator (strain ATCC 17699 / DSM 428 / KCTC 22496 / NCIMB 10442 / H16 / Stanier 337) (Ralstonia eutropha), this protein is ATP synthase gamma chain.